The following is a 385-amino-acid chain: tRNA pseudouridine synthase D (385 aa).

Aspartate 65 serves as the catalytic Nucleophile. One can recognise a TRUD domain in the interval 143–345 (GCENYFGEQR…SDGVRKAFFK (203 aa)).

The protein belongs to the pseudouridine synthase TruD family.

It catalyses the reaction uridine(13) in tRNA = pseudouridine(13) in tRNA. In terms of biological role, responsible for synthesis of pseudouridine from uracil-13 in transfer RNAs. The polypeptide is tRNA pseudouridine synthase D (Aquifex aeolicus (strain VF5)).